Here is a 120-residue protein sequence, read N- to C-terminus: MQRNMLRAKLHRATVTQADLDYEGSCGIDEDLLDAADMREYEKIELYNVNNGERFSTYIIKGKRGSGEISLNGAAARRAHVGDLLIICTYAPMNEEEVASYKPKVVLLGEGNKIKAIKET.

Ser-25 (schiff-base intermediate with substrate; via pyruvic acid) is an active-site residue. A Pyruvic acid (Ser) modification is found at Ser-25. Thr-57 contributes to the substrate binding site. Tyr-58 serves as the catalytic Proton donor. Gly-73 to Ala-75 is a substrate binding site.

This sequence belongs to the PanD family. In terms of assembly, heterooctamer of four alpha and four beta subunits. Requires pyruvate as cofactor. Post-translationally, is synthesized initially as an inactive proenzyme, which is activated by self-cleavage at a specific serine bond to produce a beta-subunit with a hydroxyl group at its C-terminus and an alpha-subunit with a pyruvoyl group at its N-terminus.

The protein localises to the cytoplasm. It carries out the reaction L-aspartate + H(+) = beta-alanine + CO2. It participates in cofactor biosynthesis; (R)-pantothenate biosynthesis; beta-alanine from L-aspartate: step 1/1. Its function is as follows. Catalyzes the pyruvoyl-dependent decarboxylation of aspartate to produce beta-alanine. In Ralstonia pickettii (strain 12J), this protein is Aspartate 1-decarboxylase.